The primary structure comprises 676 residues: tRNA 5-methylaminomethyl-2-thiouridine biosynthesis bifunctional protein MnmC (676 aa).

The interval methionine 1–asparagine 241 is tRNA (mnm(5)s(2)U34)-methyltransferase. An FAD-dependent cmnm(5)s(2)U34 oxidoreductase region spans residues isoleucine 268–lysine 676.

This sequence in the N-terminal section; belongs to the methyltransferase superfamily. tRNA (mnm(5)s(2)U34)-methyltransferase family. The protein in the C-terminal section; belongs to the DAO family. FAD serves as cofactor.

Its subcellular location is the cytoplasm. The catalysed reaction is 5-aminomethyl-2-thiouridine(34) in tRNA + S-adenosyl-L-methionine = 5-methylaminomethyl-2-thiouridine(34) in tRNA + S-adenosyl-L-homocysteine + H(+). Catalyzes the last two steps in the biosynthesis of 5-methylaminomethyl-2-thiouridine (mnm(5)s(2)U) at the wobble position (U34) in tRNA. Catalyzes the FAD-dependent demodification of cmnm(5)s(2)U34 to nm(5)s(2)U34, followed by the transfer of a methyl group from S-adenosyl-L-methionine to nm(5)s(2)U34, to form mnm(5)s(2)U34. The sequence is that of tRNA 5-methylaminomethyl-2-thiouridine biosynthesis bifunctional protein MnmC from Histophilus somni (strain 2336) (Haemophilus somnus).